An 86-amino-acid chain; its full sequence is Small ribosomal subunit protein bS20 (86 aa).

Residues 1–27 (MANNKSAKKRAIQAEKRRQHNASRRSM) are disordered.

This sequence belongs to the bacterial ribosomal protein bS20 family.

Binds directly to 16S ribosomal RNA. The chain is Small ribosomal subunit protein bS20 from Vibrio vulnificus (strain CMCP6).